The primary structure comprises 956 residues: Zinc fingers and homeoboxes protein 3 (956 aa).

Positions 1-107 (MASKRKSTTP…SEHTDFNKDP (107 aa)) are required for nuclear localization. Residues 22–66 (DASMEAQPAETLPEGPQQDLPPEASAASSEAAQNPSSTDGSTLAN) form a disordered region. Low complexity predominate over residues 42-58 (PPEASAASSEAAQNPSS). C2H2-type zinc fingers lie at residues 77–100 (YSCK…NSEH) and 109–132 (FVCS…ATCH). The segment at 242–488 (ASASSAKNPH…LLTACPSITS (247 aa)) is required for homodimerization and interaction with NFYA. Residues 303–502 (LSSIPTYNAA…DASIYKNKKS (200 aa)) form a required for repressor activity region. 2 DNA-binding regions (homeobox) span residues 304 to 363 (SSIP…GISW) and 494 to 553 (ASIY…RNLK). The interval 497 to 555 (YKNKKSHEQLSALKGSFCRNQFPGQSEVEHLTKVTGLSTREVRKWFSDRRYHCRNLKGS) is required for nuclear localization. Disordered regions lie at residues 598 to 618 (PSAK…KYKE) and 666 to 695 (KVNA…GEED). Ser-599 and Ser-604 each carry phosphoserine. The homeobox 3 DNA-binding region spans 612 to 671 (TPTKYKERAPEQLRALESSFAQNPLPLDEELDRLRSETKMTRREIDSWFSERRKKVNAEE). The segment covering 666-677 (KVNAEETKKAEE) has biased composition (basic and acidic residues). The segment covering 679-695 (ASQEEEEAAEDEGGEED) has biased composition (acidic residues). A phosphoserine mark is found at Ser-680, Ser-708, and Ser-723. 2 DNA-binding regions (homeobox) span residues 764–823 (PGKV…KNGQ) and 835–894 (FPPG…TRAV). The interval 890–956 (ETRAVADTGS…PQAGRQLETD (67 aa)) is disordered. Ser-927 and Ser-946 each carry phosphoserine.

Belongs to the ZHX family. In terms of assembly, homodimer (via homeobox domain 1). Heterodimer with ZHX1 (via homeobox domain 1). Heterodimer with ZHX2 (via homeobox domain 1). Heterodimerization with ZHX1 is a prerequisite for repressor activity. Interacts with NFYA. Widely expressed. High expression in kidney. Expressed during osteogenic differentiation.

It localises to the nucleus. Its function is as follows. Acts as a transcriptional repressor. Involved in the early stages of mesenchymal stem cell (MSC) osteogenic differentiation. Is a regulator of podocyte gene expression during primary glomerula disease. Binds to promoter DNA. The chain is Zinc fingers and homeoboxes protein 3 (ZHX3) from Homo sapiens (Human).